The sequence spans 183 residues: Shikimate kinase (183 aa).

18 to 23 (GVGKTT) is a binding site for ATP. Threonine 22 contributes to the Mg(2+) binding site. Substrate-binding residues include aspartate 40, arginine 64, and glycine 86. Arginine 125 lines the ATP pocket. Arginine 143 contacts substrate.

The protein belongs to the shikimate kinase family. Monomer. The cofactor is Mg(2+).

Its subcellular location is the cytoplasm. It catalyses the reaction shikimate + ATP = 3-phosphoshikimate + ADP + H(+). The protein operates within metabolic intermediate biosynthesis; chorismate biosynthesis; chorismate from D-erythrose 4-phosphate and phosphoenolpyruvate: step 5/7. In terms of biological role, catalyzes the specific phosphorylation of the 3-hydroxyl group of shikimic acid using ATP as a cosubstrate. The polypeptide is Shikimate kinase (Oceanobacillus iheyensis (strain DSM 14371 / CIP 107618 / JCM 11309 / KCTC 3954 / HTE831)).